The following is a 303-amino-acid chain: Putative 1-phosphofructokinase (303 aa).

ATP contacts are provided by residues 217–222 and 249–250; these read SDGDKG and GD. Residue Asp-250 is the Proton acceptor of the active site.

This sequence belongs to the carbohydrate kinase PfkB family.

The catalysed reaction is beta-D-fructose 1-phosphate + ATP = beta-D-fructose 1,6-bisphosphate + ADP + H(+). In terms of biological role, catalyzes the ATP-dependent phosphorylation of fructose-l-phosphate to fructose-l,6-bisphosphate. This Mycoplasma genitalium (strain ATCC 33530 / DSM 19775 / NCTC 10195 / G37) (Mycoplasmoides genitalium) protein is Putative 1-phosphofructokinase (fruK).